The primary structure comprises 154 residues: Fibroblast growth factor 2 (154 aa).

The propeptide occupies 1 to 9; the sequence is MAASGITSL. Asparagine 35 is a binding site for heparin. A Phosphotyrosine; by TEC modification is found at tyrosine 81. Residue lysine 94 forms a Glycyl lysine isopeptide (Lys-Gly) (interchain with G-Cter in SUMO1) linkage. The heparin-binding stretch occupies residues 127 to 143; the sequence is KRTGQYKLGSKTGPGQK.

It belongs to the heparin-binding growth factors family. Monomer. Homodimer. Interacts with FGFR1, FGFR2, FGFR3 and FGFR4. Affinity between fibroblast growth factors (FGFs) and their receptors is increased by heparan sulfate glycosaminoglycans that function as coreceptors. Interacts with CSPG4, FGFBP1 and TEC. Found in a complex with FGFBP1, FGF1 and FGF2. Interacts with FGFBP3. Interacts with integrin ITGAV:ITGB3; the interaction is required for FGF2 signaling. Interacts with SNORC (via the extracellular domain). Interacts with glypican GPC3. Post-translationally, phosphorylation at Tyr-81 regulates FGF2 unconventional secretion.

It is found in the secreted. Its subcellular location is the nucleus. In terms of biological role, acts as a ligand for FGFR1, FGFR2, FGFR3 and FGFR4. Also acts as an integrin ligand which is required for FGF2 signaling. Binds to integrin ITGAV:ITGB3. Plays an important role in the regulation of cell survival, cell division, cell differentiation and cell migration. Functions as a potent mitogen in vitro. Can induce angiogenesis. Mediates phosphorylation of ERK1/2 and thereby promotes retinal lens fiber differentiation. This Mus musculus (Mouse) protein is Fibroblast growth factor 2 (Fgf2).